Consider the following 342-residue polypeptide: tRNA N6-adenosine threonylcarbamoyltransferase (342 aa).

H115 and H119 together coordinate Fe cation. Substrate-binding positions include 137-141, D170, G183, D187, and N276; that span reads IVSGG. D304 serves as a coordination point for Fe cation.

It belongs to the KAE1 / TsaD family. Fe(2+) is required as a cofactor.

It is found in the cytoplasm. The enzyme catalyses L-threonylcarbamoyladenylate + adenosine(37) in tRNA = N(6)-L-threonylcarbamoyladenosine(37) in tRNA + AMP + H(+). Its function is as follows. Required for the formation of a threonylcarbamoyl group on adenosine at position 37 (t(6)A37) in tRNAs that read codons beginning with adenine. Is involved in the transfer of the threonylcarbamoyl moiety of threonylcarbamoyl-AMP (TC-AMP) to the N6 group of A37, together with TsaE and TsaB. TsaD likely plays a direct catalytic role in this reaction. In Staphylococcus saprophyticus subsp. saprophyticus (strain ATCC 15305 / DSM 20229 / NCIMB 8711 / NCTC 7292 / S-41), this protein is tRNA N6-adenosine threonylcarbamoyltransferase.